Here is a 192-residue protein sequence, read N- to C-terminus: YTEDDLGSGDYDSMKEPCFREENAHFNRIFLPTVYSIIFLTGIVGNGLVILVMGYQKKLRSMTDKYRLHLSVADLLFVLTLPFWAVDAVANWYFGQFLCKAVHVIYTVNLYSSVLILAFISLDRYLAIVHATNSQRPRKLLAEKVVYVGVWLPAVLLTIPDLIFADIKEADERYICDRFYPSDLWLVVFQFQ.

A Sulfotyrosine modification is found at Tyr-1. The interval 1–11 is important for chemokine binding and signaling; that stretch reads YTEDDLGSGDY. Topologically, residues 1–28 are extracellular; that stretch reads YTEDDLGSGDYDSMKEPCFREENAHFNR. Ser-8 carries an O-linked (Xyl...) (chondroitin sulfate) serine glycan. Tyr-11 is modified (sulfotyrosine). A helical membrane pass occupies residues 29-53; sequence IFLPTVYSIIFLTGIVGNGLVILVM. The Cytoplasmic segment spans residues 54 to 67; it reads GYQKKLRSMTDKYR. Residues 68 to 89 traverse the membrane as a helical segment; it reads LHLSVADLLFVLTLPFWAVDAV. The tract at residues 84–87 is chemokine binding; sequence WAVD. The Extracellular portion of the chain corresponds to 90-100; it reads ANWYFGQFLCK. A disulfide bond links Cys-99 and Cys-176. A helical transmembrane segment spans residues 101-120; that stretch reads AVHVIYTVNLYSSVLILAFI. The interval 103-107 is chemokine binding; that stretch reads HVIYT. Residues 121 to 144 are Cytoplasmic-facing; it reads SLDRYLAIVHATNSQRPRKLLAEK. Residues 123–125 carry the Important for signaling motif; sequence DRY. The interval 125–137 is involved in dimerization; when bound to chemokine; that stretch reads YLAIVHATNSQRP. The helical transmembrane segment at 145 to 164 threads the bilayer; it reads VVYVGVWLPAVLLTIPDLIF. Residues 165–185 lie on the Extracellular side of the membrane; it reads ADIKEADERYICDRFYPSDLW. The interval 176–180 is chemokine binding, important for signaling; that stretch reads CDRFY. Residues 186–192 form a helical membrane-spanning segment; it reads LVVFQFQ.

Belongs to the G-protein coupled receptor 1 family. In terms of assembly, monomer. Can form homodimers. Interacts with CD164. Interacts with ARRB2; the interaction is dependent on the C-terminal phosphorylation of CXCR4 and allows activation of MAPK1 and MAPK3. Interacts with ARR3; the interaction is dependent on the C-terminal phosphorylation of CXCR4 and modulates calcium mobilization. Interacts with RNF113A; the interaction, enhanced by CXCL12, promotes CXCR4 ubiquitination and subsequent degradation. Interacts (via the cytoplasmic C-terminal) with ITCH (via the WW domains I and II); the interaction, enhanced by CXCL12, promotes CXCR4 ubiquitination and leads to its degradation. Interacts with extracellular ubiquitin. Interacts with DBN1; this interaction is enhanced by antigenic stimulation. Following LPS binding, may form a complex with GDF5, HSP90AA1 and HSPA8. Post-translationally, phosphorylated on agonist stimulation. Rapidly phosphorylated on serine and threonine residues in the C-terminal. Ubiquitinated after ligand binding, leading to its degradation. Ubiquitinated by ITCH at the cell membrane on agonist stimulation. The ubiquitin-dependent mechanism, endosomal sorting complex required for transport (ESCRT), then targets CXCR4 for lysosomal degradation. This process is dependent also on prior Ser-/Thr-phosphorylation in the C-terminal of CXCR4. Also binding of ARRB1 to STAM negatively regulates CXCR4 sorting to lysosomes though modulating ubiquitination of SFR5S. In terms of processing, sulfation is required for efficient binding of CXCL12/SDF-1alpha and promotes its dimerization. Post-translationally, O- and N-glycosylated. N-glycosylation can mask coreceptor function. The O-glycosylation chondroitin sulfate attachment does not affect interaction with CXCL12/SDF-1alpha nor its coreceptor activity.

It is found in the cell membrane. The protein resides in the cell junction. The protein localises to the early endosome. It localises to the late endosome. Its subcellular location is the lysosome. Its function is as follows. Receptor for the C-X-C chemokine CXCL12/SDF-1 that transduces a signal by increasing intracellular calcium ion levels and enhancing MAPK1/MAPK3 activation. Involved in the AKT signaling cascade. Plays a role in regulation of cell migration, e.g. during wound healing. Acts as a receptor for extracellular ubiquitin; leading to enhanced intracellular calcium ions and reduced cellular cAMP levels. Binds bacterial lipopolysaccharide (LPS) et mediates LPS-induced inflammatory response, including TNF secretion by monocytes. Involved in hematopoiesis and in cardiac ventricular septum formation. Also plays an essential role in vascularization of the gastrointestinal tract, probably by regulating vascular branching and/or remodeling processes in endothelial cells. Involved in cerebellar development. In the CNS, could mediate hippocampal-neuron survival. The protein is C-X-C chemokine receptor type 4 (CXCR4) of Ovis aries (Sheep).